The sequence spans 1205 residues: MKVTVCFGRTGIVVPCKEGQLRVGELTQQALQRYLKTREKGPGYWVKIHHLEYTDGGILDPDDVLADVVEDKDKLIAVFEEQEPLHKIESPSGNPADRQSPDAFETEVAAQLAAFKPIGGEIEVTPSALKLGTPLLVRRSSDPVPGPPADTQPSASHPGGQSLKLVVPDSTQNLEDREVLNGVQTELLTSPRTKDTLSDMTRTVEISGEGGPLGIHVVPFFSSLSGRILGLFIRGIEDNSRSKREGLFHENECIVKINNVDLVDKTFAQAQDVFRQAMKSPSVLLHVLPPQNREQYEKSVIGSLNIFGNNDGVLKTKVPPPVHGKSGLKTANLTGTDSPETDASASLQQNKSPRVPRLGGKPSSPSLSPLMGFGSNKNAKKIKIDLKKGPEGLGFTVVTRDSSIHGPGPIFVKNILPKGAAIKDGRLQSGDRILEVNGRDVTGRTQEELVAMLRSTKQGETASLVIARQEGHFLPRELKGEPDCCALSLETSEQLTFEIPLNDSGSAGLGVSLKGNKSRETGTDLGIFIKSIIHGGAAFKDGRLRMNDQLIAVNGESLLGKSNHEAMETLRRSMSMEGNIRGMIQLVILRRPERPMEDPAECGAFSKPCFENCQNAVTTSRRNDNSILHPLGTCSPQDKQKGLLLPNDGWAESEVPPSPTPHSALGLGLEDYSHSSGVDSAVYFPDQHINFRSVTPARQPESINLKASKSMDLVPDESKVHSLAGQKSESPSKDFGPTLGLKKSSSLESLQTAVAEVRKNDLPFHRPRPHMVRGRGCNESFRAAIDKSYDGPEEIEADGLSDKSSHSGQGALNCESAPQGNSELEDMENKARKVKKTKEKEKKKEKGKLKVKEKKRKEENEDPERKIKKKGFGAMLRFGKKKEDKGGKAEQKGTLKHGGLREEELEKMKEERERIGAKHQELREKQARGLLDYATGAIGSVYDMDDDEMDPNYARVNHFREPCTSANVFRSPSPPRAGPFGYPRDGHPLSPERDHLEGLYAKVNKPYHPLVPADSGRPTGGSTDRIQKLRKEYYQARREGFPLYEDDEGRARPSEYDLLWVPGRGPDGNAHNLRFEGMERQYASLPRGGPADPVDYLPAAPRGLYKERELPYYPGAHPMHPPKGSYPRPTELRVADLRYPQHYPPPPAPQHKGPFRQDVPPSPPQHQRMPAYQETGRPGPRGGSPDQYPYRTQDSRQKNPMTAAV.

Disordered regions lie at residues 83–104 and 137–165; these read EPLH…PDAF and VRRS…SLKL. Ser-100 is subject to Phosphoserine. The 89-residue stretch at 201–289 folds into the PDZ 1 domain; sequence TRTVEISGEG…SPSVLLHVLP (89 aa). Positions 318–374 are disordered; that stretch reads VPPPVHGKSGLKTANLTGTDSPETDASASLQQNKSPRVPRLGGKPSSPSLSPLMGFG. Over residues 329-352 the composition is skewed to polar residues; the sequence is KTANLTGTDSPETDASASLQQNKS. Phosphoserine occurs at positions 346, 352, and 368. Residues 356 to 374 show a composition bias toward low complexity; the sequence is PRLGGKPSSPSLSPLMGFG. PDZ domains lie at 383 to 468 and 498 to 585; these read KIDL…VIAR and EIPL…GMIQ. Ser-635, Ser-710, Ser-728, Ser-730, Ser-746, Ser-749, and Ser-801 each carry phosphoserine. Residues 707–743 form a disordered region; sequence ASKSMDLVPDESKVHSLAGQKSESPSKDFGPTLGLKK. 2 disordered regions span residues 784–921 and 1111–1205; these read AIDK…KHQE and PYYP…TAAV. A compositionally biased stretch (polar residues) spans 806–822; the sequence is HSGQGALNCESAPQGNS. Composition is skewed to basic and acidic residues over residues 838-865 and 881-921; these read KEKE…DPER and KKED…KHQE. At Ser-1184 the chain carries Phosphoserine.

Belongs to the PAR3 family. In terms of assembly, interacts with PARD6B. Interacts with INSC/inscuteable. In terms of tissue distribution, highly expressed in kidney, lung and skeletal muscle. Expressed at intermediate levels in brain, heart, placenta, liver and pancreas. Isoform 1 is predominant, while isoform 2 and isoform 3 are expressed at lower levels.

It localises to the endomembrane system. The protein resides in the cell junction. The protein localises to the tight junction. Its function is as follows. Putative adapter protein involved in asymmetrical cell division and cell polarization processes. May play a role in the formation of epithelial tight junctions. The polypeptide is Partitioning defective 3 homolog B (PARD3B) (Homo sapiens (Human)).